Consider the following 237-residue polypeptide: Sulfolipid-1 exporter Sap (237 aa).

A run of 6 helical transmembrane segments spans residues 5–25 (VLVLALSVICEPVRIGLVVLM), 38–58 (FLCGGYTMAGGVAMVTLVVLG), 66–86 (FSVAEVQIGTGLIALLIAFAL), 141–161 (VSGLGAALPSANYMGAMAAIL), 171–191 (ALAVVTFNVVAFTVAEVPLVS), and 217–237 (DAALLVAAGGCLMLTLGLSNL).

It belongs to the peptidoglycolipid addressing protein (GAP) (TC 2.A.116) family.

The protein resides in the cell inner membrane. In terms of biological role, required for the transport across the inner membrane of sulfolipid-1 (SL-1), which is a major cell wall lipid of pathogenic mycobacteria. Could also transport SL1278 (2-palmitoyl-3-(C43)-phthioceranyl-alpha, alpha'-D-trehalose-2'-sulfate), which is the precursor of SL-1. May potentiate SL-1 levels and confer specificity for sulfolipids over structurally similar glycolipids. This chain is Sulfolipid-1 exporter Sap, found in Mycobacterium tuberculosis (strain ATCC 25618 / H37Rv).